Here is a 279-residue protein sequence, read N- to C-terminus: Aquaporin A (279 aa).

The Cytoplasmic portion of the chain corresponds to 1-40 (MVKVVPLRFITYDPLKDPSKMIYRRPISKPVKAFKGFFSE). Residues 41 to 61 (FLGTLYLVYFCGGSVCAAFAV) form a helical membrane-spanning segment. The Extracellular portion of the chain corresponds to 62 to 69 (AGDSAARA). The helical transmembrane segment at 70 to 90 (LLGGLIQGMALAALIWAVSGV) threads the bilayer. At 91 to 114 (SGCNLNPAVTLANLLSGRVGLIDS) the chain is on the cytoplasmic side. The NPA 1 motif lies at 96 to 98 (NPA). A helical transmembrane segment spans residues 115–135 (LYYVAAQILGCIAGAGILYGC). The Extracellular segment spans residues 136-158 (LPNMYRIDLGVPHLAPGMNTGQA). Residues 159-179 (FLMEMMLTSILCLCVLGTSVF) form a helical membrane-spanning segment. The Cytoplasmic portion of the chain corresponds to 180–188 (NVWDRRLNR). The helical transmembrane segment at 189 to 209 (IAPFAIGLALFIGVAIGFNFS) threads the bilayer. The Extracellular portion of the chain corresponds to 210–227 (GGALNPVRVLGPSIISGV). Positions 214 to 216 (NPV) match the NPA 2 motif. The helical transmembrane segment at 228–248 (WSHHWVYWLGPIVGAILAAFI) threads the bilayer. Over 249–279 (YRCLLQERFDVIERPGYIAPLIDPSTAVSSY) the chain is Cytoplasmic.

Belongs to the MIP/aquaporin (TC 1.A.8) family.

It is found in the cell membrane. Functionally, may form a water-specific channel. Required for prolonged spore survival on fruiting bodies. The polypeptide is Aquaporin A (aqpA) (Dictyostelium discoideum (Social amoeba)).